We begin with the raw amino-acid sequence, 124 residues long: Small ribosomal subunit protein uS11 (124 aa).

It belongs to the universal ribosomal protein uS11 family. In terms of assembly, part of the 30S ribosomal subunit.

Functionally, located on the platform of the 30S subunit. The chain is Small ribosomal subunit protein uS11 from Methanococcus aeolicus (strain ATCC BAA-1280 / DSM 17508 / OCM 812 / Nankai-3).